Consider the following 383-residue polypeptide: MTTRTATSTSTTVHGHLGDLKLRNAAITGPHLQPKAAKQDLADTKPDSARTFPGLGFKLSPTEERLRAKRNWGFLETAYDNSKVMGLTTHFVTITMAIVFNKSWLAKPVYDWLNTYDRFTIHTVHTWILLSTCQLLVIGLFALTDLSGRPSWLARYRMQPHKPPTLAQYKKLIPVVLFNLVVVNTISNIIYYPLAEWRGIQTTYETLPSGKKLVAQWLVCLLMEDIGFYTVHRALHHPRIYKYIHKKHHEFSAPIAGASTYAHPLEHYFSNLVPILVGLLITRAHISVQYLFFTGLMIGSHVQHSGYNIPFLTCALVHDWHHYFNTENYGPVGLLDAIFKTNKTFKAWTSETVAAFHGDRAKARQAALEKLAQIEAEEQERIR.

Transmembrane regions (helical) follow at residues 84-104, 123-143, 172-192, and 214-236; these read VMGL…NKSW, TVHT…LFAL, LIPV…IIYY, and VAQW…RALH. One can recognise a Fatty acid hydroxylase domain in the interval 217–341; that stretch reads WLVCLLMEDI…VGLLDAIFKT (125 aa). An N-linked (GlcNAc...) asparagine glycan is attached at N342.

Belongs to the sterol desaturase family.

It is found in the membrane. The protein operates within secondary metabolite biosynthesis. Its function is as follows. Fatty acid hydroxylase; part of the gene cluster that mediates the biosynthesis of the glycolipid biosurfactant ustilagic acid (UA). UA is a secreted cellobiose glycolipid that is toxic for many microorganisms and confers biocontrol activity to U.maydis. UA consists of 15,16-dihydroxypalmitic or 2,15,16-trihydroxypalmitic acid, which is O-glycosidically linked to cellobiose at its terminal hydroxyl group. In addition, the cellobiose moiety is acetylated and acylated with a short-chain hydroxy fatty acid. UA biosynthesis starts with omega-hydroxylation of palmitic acid catalyzed by the cytochrome P450 monooxygenase cyp1. Terminal hydroxylation of palmitic acid precedes subterminal hydroxylation catalyzed by the cytochrome P450 monooxygenase cyp2. Sequential glucosylation of the hydroxy fatty acid is probably catalyzed by the glycosyltransferase ugt1. The cellobiose lipid is further decorated by acetylation of the proximal glucose residue and by acylation with a short-chain beta-hydroxy fatty acid at the distal glucose residue. The acyltransferase uat1 may be a good candidate for catalyzing either acetylation or acylation of the cellobiose lipid. The fatty acid synthase fas2 may be involved in synthesis of the carbon backbone of the short-chain beta-hydroxy fatty acid esterified to the cellobiose disaccharide. The secreted UA consists of a mixture of both alpha-hydroxylated and non-hydroxylated glycolipids; therefore, alpha-hydroxylation of the long-chain fatty, catalyzed by the fatty acid hydroxylase ahd1, occurs late in UA biosynthesis and may be the last step before secretion. The chain is Fatty acid hydroxylase ahd1 from Mycosarcoma maydis (Corn smut fungus).